A 204-amino-acid chain; its full sequence is Guanylate kinase (204 aa).

In terms of domain architecture, Guanylate kinase-like spans 3–181; that stretch reads GTLYIVSASS…AVSEMSAIFT (179 aa). ATP is bound at residue 10-17; it reads ASSGTGKS.

Belongs to the guanylate kinase family.

Its subcellular location is the cytoplasm. It carries out the reaction GMP + ATP = GDP + ADP. Essential for recycling GMP and indirectly, cGMP. The polypeptide is Guanylate kinase (Xylella fastidiosa (strain Temecula1 / ATCC 700964)).